A 396-amino-acid chain; its full sequence is MLPKLILLATLYISQFIPTTFFIQALPVFMRQQKMSLDVIGFLGLLILPSGLKFLWSPFIDRYRLGKLGHYRGWIICFQLLLISTMLVTAFIDIQDNLNAFLTCMFLASLFSSSQDIATDALAVNLLEPQERGLGNAIQSGGNIFGAIIGGGVMLILLDKIGWRYSLITLSIFMLINLVPILIYREKSQHQLENSTFFRSYFQPFISFLSRPKALPWLFVVLLYMMGDSVTSLMIRPLLVDRGLSLPDIGWILGIVSYSARIVSALIAGLVIVKLGRIKSLIIFGFIADLTTLLYIIPAIGVSSLLVLYTVCIIVNATQSMAYTALLSAMMDKCEKNTAATDYTMQVSVMFLGGIAATVLSGMLATTMGYSFIFIMSAAVSLLSVFLITQEYGVSS.

The first 25 residues, 1–25 (MLPKLILLATLYISQFIPTTFFIQA), serve as a signal peptide directing secretion. Residues 26-39 (LPVFMRQQKMSLDV) are Cytoplasmic-facing. Residues 40–60 (IGFLGLLILPSGLKFLWSPFI) traverse the membrane as a helical segment. The Periplasmic portion of the chain corresponds to 61-73 (DRYRLGKLGHYRG). The helical transmembrane segment at 74 to 94 (WIICFQLLLISTMLVTAFIDI) threads the bilayer. The Cytoplasmic segment spans residues 95–104 (QDNLNAFLTC). Residues 105–127 (MFLASLFSSSQDIATDALAVNLL) traverse the membrane as a helical segment. Over 128–137 (EPQERGLGNA) the chain is Periplasmic. Residues 138-158 (IQSGGNIFGAIIGGGVMLILL) form a helical membrane-spanning segment. At 159–162 (DKIG) the chain is on the cytoplasmic side. A helical membrane pass occupies residues 163-183 (WRYSLITLSIFMLINLVPILI). Over 184-214 (YREKSQHQLENSTFFRSYFQPFISFLSRPKA) the chain is Periplasmic. The helical transmembrane segment at 215 to 235 (LPWLFVVLLYMMGDSVTSLMI) threads the bilayer. Residues 236-251 (RPLLVDRGLSLPDIGW) are Cytoplasmic-facing. The chain crosses the membrane as a helical span at residues 252-272 (ILGIVSYSARIVSALIAGLVI). The Periplasmic portion of the chain corresponds to 273–281 (VKLGRIKSL). Residues 282-302 (IIFGFIADLTTLLYIIPAIGV) traverse the membrane as a helical segment. Topologically, residues 303 to 304 (SS) are cytoplasmic. The helical transmembrane segment at 305 to 325 (LLVLYTVCIIVNATQSMAYTA) threads the bilayer. At 326-346 (LLSAMMDKCEKNTAATDYTMQ) the chain is on the periplasmic side. 2 consecutive transmembrane segments (helical) span residues 347 to 367 (VSVM…LATT) and 368 to 388 (MGYS…VFLI). Residues 389 to 396 (TQEYGVSS) lie on the Periplasmic side of the membrane.

This sequence belongs to the major facilitator superfamily.

It is found in the cell inner membrane. Functionally, involved in the TolC-like protein HgdD-dependent secretion of schizokinen, a dihydroxamate-type siderophore. Transports schizokinen from the cytoplasm to the periplasm. The sequence is that of Schizokinen exporter SchE from Nostoc sp. (strain PCC 7120 / SAG 25.82 / UTEX 2576).